Reading from the N-terminus, the 391-residue chain is 3-ketoacyl-CoA thiolase (391 aa).

Cys95 serves as the catalytic Acyl-thioester intermediate. Catalysis depends on proton acceptor residues His347 and Cys377.

This sequence belongs to the thiolase-like superfamily. Thiolase family. As to quaternary structure, heterotetramer of two alpha chains (FadB) and two beta chains (FadA).

It localises to the cytoplasm. The catalysed reaction is an acyl-CoA + acetyl-CoA = a 3-oxoacyl-CoA + CoA. It functions in the pathway lipid metabolism; fatty acid beta-oxidation. In terms of biological role, catalyzes the final step of fatty acid oxidation in which acetyl-CoA is released and the CoA ester of a fatty acid two carbons shorter is formed. This is 3-ketoacyl-CoA thiolase from Vibrio parahaemolyticus serotype O3:K6 (strain RIMD 2210633).